Here is a 329-residue protein sequence, read N- to C-terminus: Phosphate acyltransferase (329 aa).

Belongs to the PlsX family. As to quaternary structure, homodimer. Probably interacts with PlsY.

Its subcellular location is the cytoplasm. The catalysed reaction is a fatty acyl-[ACP] + phosphate = an acyl phosphate + holo-[ACP]. Its pathway is lipid metabolism; phospholipid metabolism. Functionally, catalyzes the reversible formation of acyl-phosphate (acyl-PO(4)) from acyl-[acyl-carrier-protein] (acyl-ACP). This enzyme utilizes acyl-ACP as fatty acyl donor, but not acyl-CoA. This is Phosphate acyltransferase from Campylobacter fetus subsp. fetus (strain 82-40).